Consider the following 243-residue polypeptide: Proteasome subunit beta (243 aa).

The interval 1–40 (MRTPMNNDISGRPDSLNGDRSDVFSPELGEFPNADDRAND) is disordered. A propeptide spans 1 to 49 (MRTPMNNDISGRPDSLNGDRSDVFSPELGEFPNADDRANDIGDMETKTG) (removed in mature form; by autocatalysis). Thr50 serves as the catalytic Nucleophile.

The protein belongs to the peptidase T1B family. As to quaternary structure, the 20S proteasome core is composed of 14 alpha and 14 beta subunits that assemble into four stacked heptameric rings, resulting in a barrel-shaped structure. The two inner rings, each composed of seven catalytic beta subunits, are sandwiched by two outer rings, each composed of seven alpha subunits. The catalytic chamber with the active sites is on the inside of the barrel. Has a gated structure, the ends of the cylinder being occluded by the N-termini of the alpha-subunits. Is capped at one or both ends by the proteasome regulatory ATPase, PAN.

It is found in the cytoplasm. The catalysed reaction is Cleavage of peptide bonds with very broad specificity.. With respect to regulation, the formation of the proteasomal ATPase PAN-20S proteasome complex, via the docking of the C-termini of PAN into the intersubunit pockets in the alpha-rings, triggers opening of the gate for substrate entry. Interconversion between the open-gate and close-gate conformations leads to a dynamic regulation of the 20S proteasome proteolysis activity. In terms of biological role, component of the proteasome core, a large protease complex with broad specificity involved in protein degradation. This chain is Proteasome subunit beta, found in Haloquadratum walsbyi (strain DSM 16790 / HBSQ001).